The following is a 181-amino-acid chain: Adenine phosphoribosyltransferase (181 aa).

This sequence belongs to the purine/pyrimidine phosphoribosyltransferase family. In terms of assembly, homodimer.

It is found in the cytoplasm. The enzyme catalyses AMP + diphosphate = 5-phospho-alpha-D-ribose 1-diphosphate + adenine. It participates in purine metabolism; AMP biosynthesis via salvage pathway; AMP from adenine: step 1/1. In terms of biological role, catalyzes a salvage reaction resulting in the formation of AMP, that is energically less costly than de novo synthesis. This is Adenine phosphoribosyltransferase from Chromohalobacter salexigens (strain ATCC BAA-138 / DSM 3043 / CIP 106854 / NCIMB 13768 / 1H11).